The primary structure comprises 333 residues: C4-dicarboxylate-binding periplasmic protein DctP (333 aa).

The signal sequence occupies residues M1–A26.

This sequence belongs to the bacterial solute-binding protein 7 family. The complex comprises the extracytoplasmic solute receptor protein DctP, and the two transmembrane proteins DctQ and DctM.

It is found in the periplasm. Its function is as follows. Part of the tripartite ATP-independent periplasmic (TRAP) transport system DctPQM involved in C4-dicarboxylates uptake. Binds C4-dicarboxylates such as fumarate, succinate, L-malate and D-malate. This Rhodobacter capsulatus (Rhodopseudomonas capsulata) protein is C4-dicarboxylate-binding periplasmic protein DctP.